A 265-amino-acid chain; its full sequence is Cytochrome c oxidase subunit 3 (265 aa).

6 consecutive transmembrane segments (helical) span residues 41–61, 85–105, 137–157, 162–182, 200–220, and 245–265; these read GGAT…FVWW, GFIL…WAFF, TLIL…ILAG, AVYA…FQGM, FFLA…FLIV, and WHFV…WGGI.

It belongs to the cytochrome c oxidase subunit 3 family. Component of the cytochrome c oxidase (complex IV, CIV), a multisubunit enzyme composed of a catalytic core of 3 subunits and several supernumerary subunits. The complex exists as a monomer or a dimer and forms supercomplexes (SCs) in the inner mitochondrial membrane with ubiquinol-cytochrome c oxidoreductase (cytochrome b-c1 complex, complex III, CIII).

It localises to the mitochondrion inner membrane. It carries out the reaction 4 Fe(II)-[cytochrome c] + O2 + 8 H(+)(in) = 4 Fe(III)-[cytochrome c] + 2 H2O + 4 H(+)(out). Functionally, component of the cytochrome c oxidase, the last enzyme in the mitochondrial electron transport chain which drives oxidative phosphorylation. The respiratory chain contains 3 multisubunit complexes succinate dehydrogenase (complex II, CII), ubiquinol-cytochrome c oxidoreductase (cytochrome b-c1 complex, complex III, CIII) and cytochrome c oxidase (complex IV, CIV), that cooperate to transfer electrons derived from NADH and succinate to molecular oxygen, creating an electrochemical gradient over the inner membrane that drives transmembrane transport and the ATP synthase. Cytochrome c oxidase is the component of the respiratory chain that catalyzes the reduction of oxygen to water. Electrons originating from reduced cytochrome c in the intermembrane space (IMS) are transferred via the dinuclear copper A center (CU(A)) of subunit 2 and heme A of subunit 1 to the active site in subunit 1, a binuclear center (BNC) formed by heme A3 and copper B (CU(B)). The BNC reduces molecular oxygen to 2 water molecules using 4 electrons from cytochrome c in the IMS and 4 protons from the mitochondrial matrix. The sequence is that of Cytochrome c oxidase subunit 3 (COX3) from Triticum aestivum (Wheat).